Here is a 330-residue protein sequence, read N- to C-terminus: Class III chitinase ARB_03514 (330 aa).

Positions 1–22 are cleaved as a signal peptide; that stretch reads MSSVKNILSFVALFAGVKTAYA. Positions 23-314 constitute a GH18 domain; that stretch reads GLNSPGHNNV…SAVKGALSAG (292 aa). N-linked (GlcNAc...) asparagine glycosylation is found at Asn-61 and Asn-135. Glu-155 (proton donor) is an active-site residue. Asn-278 and Asn-302 each carry an N-linked (GlcNAc...) asparagine glycan.

It belongs to the glycosyl hydrolase 18 family. Chitinase class III subfamily. In terms of assembly, monomer.

It is found in the secreted. It catalyses the reaction Random endo-hydrolysis of N-acetyl-beta-D-glucosaminide (1-&gt;4)-beta-linkages in chitin and chitodextrins.. Functionally, secreted chitinase involved in the degradation of chitin, a component of the cell walls of fungi and exoskeletal elements of some animals (including worms and arthropods). Plays a morphogenetic role during apical growth, cell division and differentiation (cell wall morphogenesis). This is Class III chitinase ARB_03514 from Arthroderma benhamiae (strain ATCC MYA-4681 / CBS 112371) (Trichophyton mentagrophytes).